Reading from the N-terminus, the 349-residue chain is Thioredoxin-related transmembrane protein 4 (349 aa).

The signal sequence occupies residues 1 to 23; that stretch reads MAGGRCGPQLTALLAAWIAAVAA. One can recognise a Thioredoxin domain in the interval 30 to 137; that stretch reads AALPPEQSRV…FEDLQNYILE (108 aa). Residues cysteine 64 and cysteine 67 each act as nucleophile in the active site. The cysteines at positions 64 and 67 are disulfide-linked. Residues 190–210 form a helical membrane-spanning segment; it reads VFFVIATLVFGLFMGLVLVVI. The segment covering 225–240 has biased composition (basic and acidic residues); it reads RSEQNRRSEEAHRAEQ. The segment at 225–349 is disordered; it reads RSEQNRRSEE…RKSQHADKGL (125 aa). Acidic residues-rich tracts occupy residues 242–284 and 312–321; these read QDAE…EEDN and VEPEEAEEGI. A phosphoserine mark is found at serine 251 and serine 259. Over residues 335-349 the composition is skewed to basic and acidic residues; sequence DSLRQRKSQHADKGL.

It is found in the nucleus inner membrane. The protein localises to the endoplasmic reticulum membrane. In Homo sapiens (Human), this protein is Thioredoxin-related transmembrane protein 4 (TMX4).